The chain runs to 157 residues: Protein Smg (157 aa).

It belongs to the Smg family.

The protein is Protein Smg of Enterobacter sp. (strain 638).